A 288-amino-acid chain; its full sequence is Diaminopimelate epimerase (288 aa).

Substrate-binding residues include N14 and N67. C76 (proton donor) is an active-site residue. Substrate is bound by residues 77 to 78, N166, N199, and 217 to 218; these read GN and ER. The active-site Proton acceptor is C226. Substrate is bound at residue 227–228; it reads GT.

Belongs to the diaminopimelate epimerase family. As to quaternary structure, homodimer.

Its subcellular location is the cytoplasm. The catalysed reaction is (2S,6S)-2,6-diaminopimelate = meso-2,6-diaminopimelate. It participates in amino-acid biosynthesis; L-lysine biosynthesis via DAP pathway; DL-2,6-diaminopimelate from LL-2,6-diaminopimelate: step 1/1. Functionally, catalyzes the stereoinversion of LL-2,6-diaminopimelate (L,L-DAP) to meso-diaminopimelate (meso-DAP), a precursor of L-lysine and an essential component of the bacterial peptidoglycan. This chain is Diaminopimelate epimerase, found in Bacillus thuringiensis (strain Al Hakam).